Here is a 451-residue protein sequence, read N- to C-terminus: MRTRITLALAVLLLLLAGCSPGAPADGPVTLRFQSLAWQPDSVAATKELVGEWNATHPDVKVEYIQGSWDSVHDQLLTSFEGGEAPDVIHDASDDLADFAYGGYLADLSGLLPARLASDIPRGSWETATFGRGVYGVPFLQEPRVLIADADRLRAAKVRIPTPGHPWSWPEFRQVAKKLTGPGRYGVAWPLKEPVSATLNLSLSAGGRLFHRGADDKVTVRFEAGDEVVARTIHDQVAVDREHAPASTLGSGGADTLPGLFGGRYAMVPLGFSYRQQIVRQAPEDFHWQVLPAPAGAGGLTQGVSPQTLSVSADCPHKKEAVAFIDFLLRPRNMVRLALGDWMLPTGTQALKDPALHTARHGWATGTALAARLRPAPAQSVRGYPEWKDKVATPAYQRYYSGASTLADVRHAWSGTATWCWPATSADPPPGVPRAGKRNIRDATSRLPSTP.

The signal sequence occupies residues 1-18 (MRTRITLALAVLLLLLAG). A lipid anchor (N-palmitoyl cysteine) is attached at Cys-19. The S-diacylglycerol cysteine moiety is linked to residue Cys-19. Residues 424 to 451 (TSADPPPGVPRAGKRNIRDATSRLPSTP) are disordered.

Its subcellular location is the cell membrane. Its function is as follows. May participate in oleandomycin glycosylation and secretion during antibiotic production. This is an uncharacterized protein from Streptomyces antibioticus.